Here is a 274-residue protein sequence, read N- to C-terminus: Eukaryotic translation initiation factor 3 subunit G (274 aa).

The 79-residue stretch at 192–270 folds into the RRM domain; it reads TAIRISNLSN…LILNVEWSKP (79 aa).

The protein belongs to the eIF-3 subunit G family. Component of the eukaryotic translation initiation factor 3 (eIF-3) complex.

It is found in the cytoplasm. In terms of biological role, RNA-binding component of the eukaryotic translation initiation factor 3 (eIF-3) complex, which is involved in protein synthesis of a specialized repertoire of mRNAs and, together with other initiation factors, stimulates binding of mRNA and methionyl-tRNAi to the 40S ribosome. The eIF-3 complex specifically targets and initiates translation of a subset of mRNAs involved in cell proliferation. This subunit can bind 18S rRNA. This Bombyx mori (Silk moth) protein is Eukaryotic translation initiation factor 3 subunit G.